The sequence spans 214 residues: Pyrrolidone-carboxylate peptidase 2 (214 aa).

Residues Glu-78, Cys-141, and His-165 contribute to the active site.

This sequence belongs to the peptidase C15 family. As to quaternary structure, homotetramer.

Its subcellular location is the cytoplasm. The enzyme catalyses Release of an N-terminal pyroglutamyl group from a polypeptide, the second amino acid generally not being Pro.. Functionally, removes 5-oxoproline from various penultimate amino acid residues except L-proline. This Streptococcus pneumoniae serotype 4 (strain ATCC BAA-334 / TIGR4) protein is Pyrrolidone-carboxylate peptidase 2.